The primary structure comprises 143 residues: MQFNISDIIKTLPHSYPFLLVDRVIECDPGKSIKAIKNVTFNEPFFIGHFPGHPIMPGVLIIESLAQASAICVLGKETIENKVVYLRSIENAKFRKLVTPGDTLILQANIQSVCLGVYKFRCIASVSEEKVAEATISAVLQNK.

His-49 is an active-site residue.

Belongs to the thioester dehydratase family. FabZ subfamily.

The protein localises to the cytoplasm. The enzyme catalyses a (3R)-hydroxyacyl-[ACP] = a (2E)-enoyl-[ACP] + H2O. Its function is as follows. Involved in unsaturated fatty acids biosynthesis. Catalyzes the dehydration of short chain beta-hydroxyacyl-ACPs and long chain saturated and unsaturated beta-hydroxyacyl-ACPs. The sequence is that of 3-hydroxyacyl-[acyl-carrier-protein] dehydratase FabZ from Wolbachia pipientis wMel.